The chain runs to 73 residues: Homeodomain-only protein (73 aa).

Positions 3 to 62 (TEKSVTPTEEQLEILEYNFCKVNKHPDPTTLCLIAAETGLSEEQTLKWFKQRLAEWRKSE) form a DNA-binding region, homeobox; degenerate.

The protein resides in the nucleus. Its subcellular location is the cytoplasm. In terms of biological role, atypical homeodomain protein which does not bind DNA and is required to modulate cardiac growth and development. May act via an interaction with SRF, leading to modulate the expression of SRF-dependent cardiac-specific genes and cardiac development. May act as a co-chaperone for HSPA1A and HSPA1B chaperone proteins and assist in chaperone-mediated protein refolding. This Gallus gallus (Chicken) protein is Homeodomain-only protein (HOPX).